Here is a 229-residue protein sequence, read N- to C-terminus: Transmembrane emp24 domain-containing protein 5 (229 aa).

The N-terminal stretch at 1-27 (MGVRMWLPFPMLLLSALPATLLSGAAG) is a signal peptide. Topologically, residues 28 to 196 (FTPSLDSDFT…IQESNFDRVN (169 aa)) are lumenal. Positions 45 to 126 (KECFYQPMPL…EKVIFFELIL (82 aa)) constitute a GOLD domain. A helical transmembrane segment spans residues 197–217 (FWSVVNLMVMVVVSAIQVYTL). At 218-229 (KSLFEDKRKSRT) the chain is on the cytoplasmic side.

It belongs to the EMP24/GP25L family. As to quaternary structure, interacts with TMED9 and TMED10.

The protein resides in the endoplasmic reticulum membrane. It localises to the golgi apparatus. The protein localises to the cis-Golgi network membrane. Its subcellular location is the endoplasmic reticulum-Golgi intermediate compartment membrane. Potential role in vesicular protein trafficking, mainly in the early secretory pathway. Required for the maintenance of the Golgi apparatus; involved in protein exchange between Golgi stacks during assembly. Probably not required for COPI-vesicle-mediated retrograde transport. The sequence is that of Transmembrane emp24 domain-containing protein 5 (Tmed5) from Rattus norvegicus (Rat).